We begin with the raw amino-acid sequence, 149 residues long: Cytochrome c-type biogenesis protein CcmE (149 aa).

The Cytoplasmic segment spans residues 1 to 7 (MTRKQKR). A helical; Signal-anchor for type II membrane protein transmembrane segment spans residues 8 to 28 (LAVIAGGVGFIMVAVLLVLFA). Over 29 to 149 (FGQSIAYFYM…GVWKGEGEAK (121 aa)) the chain is Periplasmic. Heme is bound by residues His123 and Tyr127.

Belongs to the CcmE/CycJ family.

It localises to the cell inner membrane. Its function is as follows. Heme chaperone required for the biogenesis of c-type cytochromes. Transiently binds heme delivered by CcmC and transfers the heme to apo-cytochromes in a process facilitated by CcmF and CcmH. The protein is Cytochrome c-type biogenesis protein CcmE of Allorhizobium ampelinum (strain ATCC BAA-846 / DSM 112012 / S4) (Agrobacterium vitis (strain S4)).